Consider the following 419-residue polypeptide: Light-independent protochlorophyllide reductase subunit N (419 aa).

Cys17, Cys42, and Cys103 together coordinate [4Fe-4S] cluster.

It belongs to the BchN/ChlN family. In terms of assembly, protochlorophyllide reductase is composed of three subunits; ChlL, ChlN and ChlB. Forms a heterotetramer of two ChlB and two ChlN subunits. [4Fe-4S] cluster is required as a cofactor.

It carries out the reaction chlorophyllide a + oxidized 2[4Fe-4S]-[ferredoxin] + 2 ADP + 2 phosphate = protochlorophyllide a + reduced 2[4Fe-4S]-[ferredoxin] + 2 ATP + 2 H2O. Its pathway is porphyrin-containing compound metabolism; chlorophyll biosynthesis (light-independent). Functionally, component of the dark-operative protochlorophyllide reductase (DPOR) that uses Mg-ATP and reduced ferredoxin to reduce ring D of protochlorophyllide (Pchlide) to form chlorophyllide a (Chlide). This reaction is light-independent. The NB-protein (ChlN-ChlB) is the catalytic component of the complex. The polypeptide is Light-independent protochlorophyllide reductase subunit N (Prochlorococcus marinus (strain NATL1A)).